Consider the following 328-residue polypeptide: Testis-specific serine/threonine-protein kinase 4 (328 aa).

Residues 25-293 (YEVGKAIGHG…ILDIIKDSWV (269 aa)) form the Protein kinase domain. ATP-binding positions include 31-39 (IGHGSYGSV) and lysine 54. The active-site Proton acceptor is aspartate 148. At threonine 197 the chain carries Phosphothreonine.

The protein belongs to the protein kinase superfamily. CAMK Ser/Thr protein kinase family. Homodimer. Interacts with HSP90; this interaction stabilizes and activates TSSK4. Interacts with ODF2 (via C-terminus); this interaction promotes ODF2 phosphorylation on 'Ser-95'. May interact with CREM. Interacts with CREB1; this interaction facilitates phosphorylation on 'Ser-133'. Interacts with QRICH2. Mg(2+) is required as a cofactor. In terms of processing, activated by autophosphorylation on Thr-197. ODF2 potentiates the autophosphorylation activity of TSSK4 at Thr-197. Ubiquitinated; HSP90 activity negatively regulates ubiquitination and degradation. In terms of tissue distribution, expressed only in the testis.

It localises to the cytoplasmic vesicle. The protein localises to the secretory vesicle. It is found in the acrosome. Its subcellular location is the cell projection. The protein resides in the cilium. It localises to the flagellum. The catalysed reaction is L-seryl-[protein] + ATP = O-phospho-L-seryl-[protein] + ADP + H(+). The enzyme catalyses L-threonyl-[protein] + ATP = O-phospho-L-threonyl-[protein] + ADP + H(+). Activated by phosphorylation on Thr-197. In terms of biological role, serine/threonine kinase which is involved in male germ cell development and in mature sperm function. May be involved in the Cre/Creb signaling pathway. Phosphorylates CREB1 on 'Ser-133' in vitro and can stimulate Cre/Creb pathway in cells. Phosphorylates CREM on 'Ser-116' in vitro. Phosphorylates ODF2 on 'Ser-95'. The polypeptide is Testis-specific serine/threonine-protein kinase 4 (Homo sapiens (Human)).